The primary structure comprises 168 residues: S-ribosylhomocysteine lyase (168 aa).

Positions 54, 58, and 128 each coordinate Fe cation.

This sequence belongs to the LuxS family. As to quaternary structure, homodimer. Requires Fe cation as cofactor.

The enzyme catalyses S-(5-deoxy-D-ribos-5-yl)-L-homocysteine = (S)-4,5-dihydroxypentane-2,3-dione + L-homocysteine. Involved in the synthesis of autoinducer 2 (AI-2) which is secreted by bacteria and is used to communicate both the cell density and the metabolic potential of the environment. The regulation of gene expression in response to changes in cell density is called quorum sensing. Catalyzes the transformation of S-ribosylhomocysteine (RHC) to homocysteine (HC) and 4,5-dihydroxy-2,3-pentadione (DPD). The sequence is that of S-ribosylhomocysteine lyase from Histophilus somni (strain 2336) (Haemophilus somnus).